We begin with the raw amino-acid sequence, 411 residues long: Na(+)/H(+) antiporter NhaA 2 (411 aa).

10 helical membrane passes run 18–38, 59–79, 97–117, 127–147, 167–187, 218–238, 261–281, 297–317, 338–358, and 366–386; these read VGGS…NSPV, LTVG…VAGL, LLPI…AATI, GWAI…ALTG, LLAI…LWLL, WYCM…LGLL, PLSA…VALS, VIAG…WLAI, VLGA…LAGI, and IAKV…SALL.

It belongs to the NhaA Na(+)/H(+) (TC 2.A.33) antiporter family.

It is found in the cell membrane. The catalysed reaction is Na(+)(in) + 2 H(+)(out) = Na(+)(out) + 2 H(+)(in). In terms of biological role, na(+)/H(+) antiporter that extrudes sodium in exchange for external protons. This is Na(+)/H(+) antiporter NhaA 2 from Rhodococcus jostii (strain RHA1).